A 262-amino-acid chain; its full sequence is Type III pantothenate kinase (262 aa).

Residue 5-12 (DAGNTRSK) coordinates ATP. Substrate is bound by residues Y102 and 110-113 (GSDR). D112 (proton acceptor) is an active-site residue. D132 lines the K(+) pocket. An ATP-binding site is contributed by T135. T190 contributes to the substrate binding site.

It belongs to the type III pantothenate kinase family. As to quaternary structure, homodimer. The cofactor is NH4(+). Requires K(+) as cofactor.

Its subcellular location is the cytoplasm. The enzyme catalyses (R)-pantothenate + ATP = (R)-4'-phosphopantothenate + ADP + H(+). Its pathway is cofactor biosynthesis; coenzyme A biosynthesis; CoA from (R)-pantothenate: step 1/5. In terms of biological role, catalyzes the phosphorylation of pantothenate (Pan), the first step in CoA biosynthesis. The protein is Type III pantothenate kinase of Idiomarina loihiensis (strain ATCC BAA-735 / DSM 15497 / L2-TR).